A 692-amino-acid polypeptide reads, in one-letter code: Elongation factor G 2 (692 aa).

A tr-type G domain is found at 8–283 (KDVRNIGIMA…GVVNYLPSPL (276 aa)). Residues 17–24 (AHIDAGKT), 81–85 (DTPGH), and 135–138 (NKMD) contribute to the GTP site.

This sequence belongs to the TRAFAC class translation factor GTPase superfamily. Classic translation factor GTPase family. EF-G/EF-2 subfamily.

It localises to the cytoplasm. Its function is as follows. Catalyzes the GTP-dependent ribosomal translocation step during translation elongation. During this step, the ribosome changes from the pre-translocational (PRE) to the post-translocational (POST) state as the newly formed A-site-bound peptidyl-tRNA and P-site-bound deacylated tRNA move to the P and E sites, respectively. Catalyzes the coordinated movement of the two tRNA molecules, the mRNA and conformational changes in the ribosome. This is Elongation factor G 2 from Desulfotalea psychrophila (strain LSv54 / DSM 12343).